We begin with the raw amino-acid sequence, 234 residues long: UPF0758 protein Smal_0281 (234 aa).

Residues 103–225 form the MPN domain; sequence VGNNPAAVGR…PVSFAERGLL (123 aa). Residues H174, H176, and D187 each coordinate Zn(2+). The short motif at 174–187 is the JAMM motif element; that stretch reads HNHPSGDPEPSSAD.

The protein belongs to the UPF0758 family.

The chain is UPF0758 protein Smal_0281 from Stenotrophomonas maltophilia (strain R551-3).